A 260-amino-acid polypeptide reads, in one-letter code: Hydroxyethylthiazole kinase 1 (260 aa).

Met39 lines the substrate pocket. ATP contacts are provided by Arg115 and Thr160. Gly187 is a substrate binding site.

This sequence belongs to the Thz kinase family. The cofactor is Mg(2+).

The catalysed reaction is 5-(2-hydroxyethyl)-4-methylthiazole + ATP = 4-methyl-5-(2-phosphooxyethyl)-thiazole + ADP + H(+). It participates in cofactor biosynthesis; thiamine diphosphate biosynthesis; 4-methyl-5-(2-phosphoethyl)-thiazole from 5-(2-hydroxyethyl)-4-methylthiazole: step 1/1. Functionally, catalyzes the phosphorylation of the hydroxyl group of 4-methyl-5-beta-hydroxyethylthiazole (THZ). The sequence is that of Hydroxyethylthiazole kinase 1 from Streptococcus pneumoniae (strain P1031).